The following is a 273-amino-acid chain: 3-methyl-2-oxobutanoate hydroxymethyltransferase (273 aa).

Positions 53 and 92 each coordinate Mg(2+). Residues 53 to 54 (DS), aspartate 92, and lysine 122 each bind 3-methyl-2-oxobutanoate. Mg(2+) is bound at residue glutamate 124. Glutamate 191 acts as the Proton acceptor in catalysis.

It belongs to the PanB family. As to quaternary structure, homodecamer; pentamer of dimers. Mg(2+) is required as a cofactor.

Its subcellular location is the cytoplasm. The enzyme catalyses 3-methyl-2-oxobutanoate + (6R)-5,10-methylene-5,6,7,8-tetrahydrofolate + H2O = 2-dehydropantoate + (6S)-5,6,7,8-tetrahydrofolate. The protein operates within cofactor biosynthesis; (R)-pantothenate biosynthesis; (R)-pantoate from 3-methyl-2-oxobutanoate: step 1/2. Functionally, catalyzes the reversible reaction in which hydroxymethyl group from 5,10-methylenetetrahydrofolate is transferred onto alpha-ketoisovalerate to form ketopantoate. The sequence is that of 3-methyl-2-oxobutanoate hydroxymethyltransferase from Bacteroides fragilis (strain ATCC 25285 / DSM 2151 / CCUG 4856 / JCM 11019 / LMG 10263 / NCTC 9343 / Onslow / VPI 2553 / EN-2).